The sequence spans 371 residues: tRNA-specific 2-thiouridylase MnmA (371 aa).

ATP-binding positions include 8–15 and Met-34; that span reads GMSGGVDS. The interaction with target base in tRNA stretch occupies residues 94 to 96; that stretch reads NPD. The active-site Nucleophile is the Cys-99. Residues Cys-99 and Cys-195 are joined by a disulfide bond. Gly-123 provides a ligand contact to ATP. An interaction with tRNA region spans residues 145-147; the sequence is KDQ. Cys-195 acts as the Cysteine persulfide intermediate in catalysis. Residues 309 to 310 are interaction with tRNA; the sequence is RY.

It belongs to the MnmA/TRMU family.

It localises to the cytoplasm. The catalysed reaction is S-sulfanyl-L-cysteinyl-[protein] + uridine(34) in tRNA + AH2 + ATP = 2-thiouridine(34) in tRNA + L-cysteinyl-[protein] + A + AMP + diphosphate + H(+). Its function is as follows. Catalyzes the 2-thiolation of uridine at the wobble position (U34) of tRNA, leading to the formation of s(2)U34. This chain is tRNA-specific 2-thiouridylase MnmA, found in Methylococcus capsulatus (strain ATCC 33009 / NCIMB 11132 / Bath).